The primary structure comprises 540 residues: MSKEIKFSSDARSAMVRGVDILADTVKVTLGPKGRNVVLEKSFGSPLITNDGVTIAKEIELEDHFENMGAKLVSEVASKTNDIAGDGTTTATVLTQAIVREGIKNVTAGANPIGIRRGIETAVAAAVEALKNNAIPVANKEAIAQVAAVSSRSEKVGEYISEAMEKVGKDGVITIEESRGMETELEVVEGMQFDRGYLSQYMVTDSEKMVADLENPYILITDKKISNIQEILPLLESILQSNRPLLIIADDVDGEALPTLVLNKIRGTFNVVAVKAPGFGDRRKAMLEDIAILTGGTVITEDLGLELKDATIEALGQAARVTVDKDSTVIVEGAGNPEAISHRVAVIKSQIETTTSEFDREKLQERLAKLSGGVAVIKVGAATETELKEMKLRIEDALNATRAAVEEGIVAGGGTALANVIPAVATLELTGDEVTGRNIVLRALEEPVRQIAHNAGFEGSIVIDRLKNAELGIGFNAATGEWVNMIDQGIIDPVKVSRSALQNAASVASLILTTEAVVANKPEPVAPAPAMDPSMMGGMM.

Residues 29–32 (TLGP), 86–90 (DGTTT), Gly413, 476–478 (NAA), and Asp492 contribute to the ATP site.

The protein belongs to the chaperonin (HSP60) family. As to quaternary structure, forms a cylinder of 14 subunits composed of two heptameric rings stacked back-to-back. Interacts with the co-chaperonin GroES.

Its subcellular location is the cytoplasm. The catalysed reaction is ATP + H2O + a folded polypeptide = ADP + phosphate + an unfolded polypeptide.. Functionally, together with its co-chaperonin GroES, plays an essential role in assisting protein folding. The GroEL-GroES system forms a nano-cage that allows encapsulation of the non-native substrate proteins and provides a physical environment optimized to promote and accelerate protein folding. This is Chaperonin GroEL from Streptococcus pneumoniae (strain P1031).